A 195-amino-acid chain; its full sequence is Transmembrane protein 126A (195 aa).

The Mitochondrial matrix segment spans residues 1–33; that stretch reads MENHKSNNKENITIVDISRKINQLPEAERNLLE. A helical transmembrane segment spans residues 34-54; sequence NGSVYVGLNAALCGLIANSLF. Residues 55–56 are Mitochondrial intermembrane-facing; that stretch reads RR. The helical transmembrane segment at 57–77 threads the bilayer; sequence ILNVTKARIAAGLPMAGIPFL. Residues 78–110 lie on the Mitochondrial matrix side of the membrane; sequence TTDLTYRCFVSFPLNTGDLDCETCTITRSGLTG. Residues 111–131 form a helical membrane-spanning segment; that stretch reads LVIGGLYPVFLAIPVNGGLAA. At 132 to 158 the chain is on the mitochondrial intermembrane side; that stretch reads RYQSALLPHKGNILSYWIRTSKPVFRK. The helical transmembrane segment at 159–175 threads the bilayer; the sequence is MLFPILLQTMFSAYLGS. Over 176–195 the chain is Mitochondrial matrix; it reads EQYKLLIKALQLSEPGKEIH.

The protein belongs to the TMEM126 family. As to quaternary structure, interacts with OXA1L; promoting cotranslational quality control in mitochondria. Strongly expressed in brain, cerebellum, skeletal muscle, testis. High expression also found in fetal brain, fetal retinal pigmentary epithelium, and fetal retina. Highly expressed in retinal ganglion cells.

The protein resides in the mitochondrion inner membrane. Functionally, protein required for the cotranslational protein quality control in the inner membrane of the mitochondria. Associates with newly synthesized polypeptides and may act as a chaperone that cooperates with OXA1L for the insertion of newly synthesized mitochondrial proteins into the inner membrane. Required for the assembly of the ND4 module of mitochondrial complex I. The polypeptide is Transmembrane protein 126A (Homo sapiens (Human)).